We begin with the raw amino-acid sequence, 572 residues long: Sialate:O-sulfotransferase 2 (572 aa).

Residues methionine 1–arginine 18 lie on the Cytoplasmic side of the membrane. A helical; Signal-anchor for type II membrane protein membrane pass occupies residues phenylalanine 19–phenylalanine 39. Over serine 40–arginine 572 the chain is Extracellular. 2 WSC domains span residues arginine 134–glutamate 226 and serine 237–glutamine 331. Residues asparagine 196, asparagine 249, asparagine 262, and asparagine 561 are each glycosylated (N-linked (GlcNAc...) asparagine).

It belongs to the WSCD family.

It localises to the golgi apparatus membrane. Functionally, sialate:O-sulfotransferase which catalyzes 8-O-sulfation at the Sia-glycan level using 3'-phosphoadenosine 5'-phosphosulfate (PAPS) as a donor, forming 8-O-sulfated Sia (Sia8S)-glycans. The polypeptide is Sialate:O-sulfotransferase 2 (wscd2) (Danio rerio (Zebrafish)).